Here is a 652-residue protein sequence, read N- to C-terminus: DNA ligase (652 aa).

NAD(+) contacts are provided by residues 29-33 (DSEYD), 78-79 (SL), and glutamate 107. The active-site N6-AMP-lysine intermediate is the lysine 109. The NAD(+) site is built by arginine 130, glutamate 164, lysine 278, and lysine 302. Positions 395, 398, 413, and 418 each coordinate Zn(2+). In terms of domain architecture, BRCT spans 577–652 (VADAALSGLT…VRDEAWLESL (76 aa)).

It belongs to the NAD-dependent DNA ligase family. LigA subfamily. The cofactor is Mg(2+). Mn(2+) is required as a cofactor.

It catalyses the reaction NAD(+) + (deoxyribonucleotide)n-3'-hydroxyl + 5'-phospho-(deoxyribonucleotide)m = (deoxyribonucleotide)n+m + AMP + beta-nicotinamide D-nucleotide.. Functionally, DNA ligase that catalyzes the formation of phosphodiester linkages between 5'-phosphoryl and 3'-hydroxyl groups in double-stranded DNA using NAD as a coenzyme and as the energy source for the reaction. It is essential for DNA replication and repair of damaged DNA. The polypeptide is DNA ligase (Streptococcus pneumoniae (strain JJA)).